The primary structure comprises 183 residues: Large ribosomal subunit protein uL6 (183 aa).

It belongs to the universal ribosomal protein uL6 family. Part of the 50S ribosomal subunit.

In terms of biological role, this protein binds to the 23S rRNA, and is important in its secondary structure. It is located near the subunit interface in the base of the L7/L12 stalk, and near the tRNA binding site of the peptidyltransferase center. The polypeptide is Large ribosomal subunit protein uL6 (Chlamydia abortus (strain DSM 27085 / S26/3) (Chlamydophila abortus)).